A 390-amino-acid polypeptide reads, in one-letter code: Nuclear receptor subfamily 2 group F member 6 (390 aa).

Residues 1–15 (MAMVTGGWGDPGGDT) are compositionally biased toward gly residues. The interval 1–50 (MAMVTGGWGDPGGDTNGVDKAGGSYPRATEDDSASPPGATSDAEPGDEER) is disordered. Residues serine 35 and serine 41 each carry the phosphoserine modification. The nuclear receptor DNA-binding region spans 54 to 129 (QVDCVVCGDK…VGMRKEAVQR (76 aa)). An NR C4-type zinc finger spans residues 57–77 (CVVCGDKSSGKHYGVFTCEGC). Residue serine 84 is modified to Phosphoserine. The NR C4-type zinc finger occupies 93–117 (CRSNRDCQIDQHHRNQCQYCRLKKC). Positions 157–380 (PVSELIAQLL…TLIRDMLLSG (224 aa)) constitute an NR LBD domain. Positions 314–390 (LQEKAQVALT…STFNWPYGSG (77 aa)) are important for dimerization.

This sequence belongs to the nuclear hormone receptor family. NR2 subfamily. In terms of assembly, binds DNA as dimer; homodimer and heterodimer with NR2F2 and probably NR2F1. Interacts with THRB.

It localises to the nucleus. Transcription factor predominantly involved in transcriptional repression. Binds to promoter/enhancer response elements that contain the imperfect 5'-AGGTCA-3' direct or inverted repeats with various spacings which are also recognized by other nuclear hormone receptors. Involved in modulation of hormonal responses. Represses transcriptional activity of the lutropin-choriogonadotropic hormone receptor/LHCGR gene, the renin/REN gene and the oxytocin-neurophysin/OXT gene. Represses the triiodothyronine-dependent and -independent transcriptional activity of the thyroid hormone receptor gene in a cell type-specific manner. The corepressing function towards thyroid hormone receptor beta/THRB involves at least in part the inhibition of THRB binding to triiodothyronine response elements (TREs) by NR2F6. Inhibits NFATC transcription factor DNA binding and subsequently its transcriptional activity. Acts as transcriptional repressor of IL-17 expression in Th-17 differentiated CD4(+) T cells and may be involved in induction and/or maintenance of peripheral immunological tolerance and autoimmunity. Involved in development of forebrain circadian clock; is required early in the development of the locus coeruleus (LC). This Mus musculus (Mouse) protein is Nuclear receptor subfamily 2 group F member 6 (Nr2f6).